The sequence spans 156 residues: Small ribosomal subunit protein uS7 (156 aa).

This sequence belongs to the universal ribosomal protein uS7 family. In terms of assembly, part of the 30S ribosomal subunit. Contacts proteins S9 and S11.

One of the primary rRNA binding proteins, it binds directly to 16S rRNA where it nucleates assembly of the head domain of the 30S subunit. Is located at the subunit interface close to the decoding center, probably blocks exit of the E-site tRNA. This Mycolicibacterium vanbaalenii (strain DSM 7251 / JCM 13017 / BCRC 16820 / KCTC 9966 / NRRL B-24157 / PYR-1) (Mycobacterium vanbaalenii) protein is Small ribosomal subunit protein uS7.